Consider the following 590-residue polypeptide: CTP synthase (590 aa).

Positions 1–278 are amidoligase domain; that stretch reads MRKHPQSATK…DAFVVRRLNL (278 aa). CTP is bound at residue S20. UTP is bound at residue S20. ATP is bound by residues 21-26 and D78; that span reads SLGKGL. Mg(2+) contacts are provided by D78 and E152. CTP-binding positions include 159 to 161, 199 to 204, and K235; these read DIE and KTKPTQ. UTP contacts are provided by residues 199–204 and K235; that span reads KTKPTQ. In terms of domain architecture, Glutamine amidotransferase type-1 spans 303–551; it reads RIALVGKYVD…VGAAIDYKSA (249 aa). G366 serves as a coordination point for L-glutamine. Residue C393 is the Nucleophile; for glutamine hydrolysis of the active site. Residues 394–397, E416, and R477 each bind L-glutamine; that span reads LGLQ. Active-site residues include H524 and E526. The disordered stretch occupies residues 566–590; that stretch reads EHLPNSSNQHRDGVERSFPAPAARG.

This sequence belongs to the CTP synthase family. In terms of assembly, homotetramer.

It catalyses the reaction UTP + L-glutamine + ATP + H2O = CTP + L-glutamate + ADP + phosphate + 2 H(+). The catalysed reaction is L-glutamine + H2O = L-glutamate + NH4(+). The enzyme catalyses UTP + NH4(+) + ATP = CTP + ADP + phosphate + 2 H(+). It participates in pyrimidine metabolism; CTP biosynthesis via de novo pathway; CTP from UDP: step 2/2. With respect to regulation, allosterically activated by GTP, when glutamine is the substrate; GTP has no effect on the reaction when ammonia is the substrate. The allosteric effector GTP functions by stabilizing the protein conformation that binds the tetrahedral intermediate(s) formed during glutamine hydrolysis. Inhibited by the product CTP, via allosteric rather than competitive inhibition. Functionally, catalyzes the ATP-dependent amination of UTP to CTP with either L-glutamine or ammonia as the source of nitrogen. Regulates intracellular CTP levels through interactions with the four ribonucleotide triphosphates. The polypeptide is CTP synthase (Mycobacterium leprae (strain Br4923)).